We begin with the raw amino-acid sequence, 139 residues long: Protein COLD-REGULATED 15A, chloroplastic (139 aa).

The N-terminal 40 residues, 1-40 (MAMSFSGAVLTGMASSFHSGAKQSSFGAVRVGQKTQFVVV), are a transit peptide targeting the chloroplast.

This sequence belongs to the COR15 protein family. In terms of assembly, forms homooligomers which interact with potential stromal substrates in the stroma of chloroplasts. Interacts with the galactose headgroup of the chloroplast lipid monogalactosyldiacylglycerol (MGDG).

The protein resides in the plastid. Its subcellular location is the chloroplast stroma. Exhibits cryoprotective activity toward stromal substrates (e.g. LDH and rubisco) in chloroplasts and in protoplasts and confers freezing tolerance to plants in a CBF-dependent manner. Protectant against various stresses (e.g. cold, drought and heat stress) by preventing protein aggregation (e.g. LDH) and attenuating enzyme inactivation. Influences the intrinsic curvature of the inner membrane of the chloroplast envelope, and modulates the freeze-induced lamellar-to-hexagonal II phase transitions that occur in regions where the plasma membrane is brought into close apposition with the chloroplast envelope during freeze-induced osmotic contraction. Mediates a shift in the melting curves of phospholipids-containing membranes to lower temperatures. Involved in the regulation of leaf senescence by abscisic acid (ABA) in a VNI2-dependent manner. The polypeptide is Protein COLD-REGULATED 15A, chloroplastic (Arabidopsis thaliana (Mouse-ear cress)).